The following is a 230-amino-acid chain: MKSLNTLVILTSVISTSVFAGAYVENREAYNLASDQMEFMLRVGYNSDMGAGIMLTNTYTLQRDDELKHGYNEIEGWYPLFKPTDKLTIQPGGLINDKSIGSGGAVYLDINYKFTPWFNLTVRNRYNHNNYSSTDLNGELDNNDSYEIGNYWNFIITDKFSYTFEPHYFYNVNDFNSSNGTKHHWEITNTFRYRINEHWLPYFELRWLDRNVGLYHREQNQIRIGAKYFF.

The first 20 residues, M1–A20, serve as a signal peptide directing secretion.

The protein belongs to the oligogalacturonate-specific porin KdgM (TC 1.B.35) family. OmpL subfamily.

The protein resides in the cell outer membrane. Functionally, outer membrane channel protein that allows an efficient diffusion of low-molecular-weight solutes such as small sugars and tetraglycine. However, the specific substrate recognized by the OmpL channel is unknown. This chain is Porin OmpL (ompL), found in Salmonella typhi.